Here is a 275-residue protein sequence, read N- to C-terminus: 3-methyl-2-oxobutanoate hydroxymethyltransferase (275 aa).

2 residues coordinate Mg(2+): aspartate 49 and aspartate 88. 3-methyl-2-oxobutanoate contacts are provided by residues 49-50, aspartate 88, and lysine 118; that span reads DS. Glutamate 120 is a Mg(2+) binding site. Glutamate 187 (proton acceptor) is an active-site residue.

This sequence belongs to the PanB family. Homodecamer; pentamer of dimers. Mg(2+) serves as cofactor.

It is found in the cytoplasm. The enzyme catalyses 3-methyl-2-oxobutanoate + (6R)-5,10-methylene-5,6,7,8-tetrahydrofolate + H2O = 2-dehydropantoate + (6S)-5,6,7,8-tetrahydrofolate. The protein operates within cofactor biosynthesis; (R)-pantothenate biosynthesis; (R)-pantoate from 3-methyl-2-oxobutanoate: step 1/2. In terms of biological role, catalyzes the reversible reaction in which hydroxymethyl group from 5,10-methylenetetrahydrofolate is transferred onto alpha-ketoisovalerate to form ketopantoate. The chain is 3-methyl-2-oxobutanoate hydroxymethyltransferase from Bartonella quintana (strain Toulouse) (Rochalimaea quintana).